Reading from the N-terminus, the 251-residue chain is Phosphate import ATP-binding protein PstB (251 aa).

The region spanning 5-246 is the ABC transporter domain; that stretch reads MNSKDVNFWY…PENKKTEDYI (242 aa). 37–44 is a binding site for ATP; that stretch reads GPSGCGKS.

The protein belongs to the ABC transporter superfamily. Phosphate importer (TC 3.A.1.7) family. In terms of assembly, the complex is composed of two ATP-binding proteins (PstB), two transmembrane proteins (PstC and PstA) and a solute-binding protein (PstS).

The protein resides in the cell membrane. It carries out the reaction phosphate(out) + ATP + H2O = ADP + 2 phosphate(in) + H(+). Part of the ABC transporter complex PstSACB involved in phosphate import. Responsible for energy coupling to the transport system. The protein is Phosphate import ATP-binding protein PstB of Methanococcus maripaludis (strain DSM 14266 / JCM 13030 / NBRC 101832 / S2 / LL).